The chain runs to 269 residues: GTP cyclohydrolase FolE2 (269 aa).

It belongs to the GTP cyclohydrolase IV family.

The enzyme catalyses GTP + H2O = 7,8-dihydroneopterin 3'-triphosphate + formate + H(+). The protein operates within cofactor biosynthesis; 7,8-dihydroneopterin triphosphate biosynthesis; 7,8-dihydroneopterin triphosphate from GTP: step 1/1. Functionally, converts GTP to 7,8-dihydroneopterin triphosphate. The chain is GTP cyclohydrolase FolE2 from Burkholderia mallei (strain NCTC 10229).